A 125-amino-acid chain; its full sequence is Small ribosomal subunit protein uS13 (125 aa).

A disordered region spans residues 95-125; that stretch reads GLPLRGQRTKTNARTRKGKRKTVANKKIASK.

Belongs to the universal ribosomal protein uS13 family. Part of the 30S ribosomal subunit. Forms a loose heterodimer with protein S19. Forms two bridges to the 50S subunit in the 70S ribosome.

Functionally, located at the top of the head of the 30S subunit, it contacts several helices of the 16S rRNA. In the 70S ribosome it contacts the 23S rRNA (bridge B1a) and protein L5 of the 50S subunit (bridge B1b), connecting the 2 subunits; these bridges are implicated in subunit movement. Contacts the tRNAs in the A and P-sites. This Borrelia garinii subsp. bavariensis (strain ATCC BAA-2496 / DSM 23469 / PBi) (Borreliella bavariensis) protein is Small ribosomal subunit protein uS13.